The sequence spans 330 residues: Pantothenate synthetase 2 (330 aa).

The active-site Proton donor is the histidine 55. ATP-binding positions include 167–170 (GEKD), valine 196, and 204–207 (ASSR).

It belongs to the pantothenate synthetase family. As to quaternary structure, homodimer.

It is found in the cytoplasm. It carries out the reaction (R)-pantoate + beta-alanine + ATP = (R)-pantothenate + AMP + diphosphate + H(+). It functions in the pathway cofactor biosynthesis; (R)-pantothenate biosynthesis; (R)-pantothenate from (R)-pantoate and beta-alanine: step 1/1. Functionally, catalyzes the condensation of pantoate with beta-alanine in an ATP-dependent reaction via a pantoyl-adenylate intermediate. The polypeptide is Pantothenate synthetase 2 (Frankia alni (strain DSM 45986 / CECT 9034 / ACN14a)).